A 188-amino-acid polypeptide reads, in one-letter code: Protein GrpE (188 aa).

The span at 1–16 (MEERNEQVVEEVKEAQ) shows a compositional bias: basic and acidic residues. The disordered stretch occupies residues 1 to 31 (MEERNEQVVEEVKEAQVEEAVTPENSEETVE).

This sequence belongs to the GrpE family. As to quaternary structure, homodimer.

It localises to the cytoplasm. In terms of biological role, participates actively in the response to hyperosmotic and heat shock by preventing the aggregation of stress-denatured proteins, in association with DnaK and GrpE. It is the nucleotide exchange factor for DnaK and may function as a thermosensor. Unfolded proteins bind initially to DnaJ; upon interaction with the DnaJ-bound protein, DnaK hydrolyzes its bound ATP, resulting in the formation of a stable complex. GrpE releases ADP from DnaK; ATP binding to DnaK triggers the release of the substrate protein, thus completing the reaction cycle. Several rounds of ATP-dependent interactions between DnaJ, DnaK and GrpE are required for fully efficient folding. The protein is Protein GrpE of Bacillus cereus (strain G9842).